Reading from the N-terminus, the 187-residue chain is Biogenesis of lysosome-related organelles complex 1 subunit 5 (187 aa).

The segment at 1-27 is disordered; it reads MSGGGTETPVACEAAQGGGGKKRDSLG. Serine 2 carries the post-translational modification N-acetylserine.

It belongs to the BLOC1S5 family. Octamer composed of one copy each BLOC1S1, BLOC1S2, BLOC1S3, BLOC1S4, BLOC1S5, BLOC1S6, DTNBP1/BLOC1S7 and SNAPIN/BLOC1S8. The BLOC-1 complex associates with the AP-3 protein complex and membrane protein cargos. Interacts with BLOC1S4, BLOC1S6, DTNBP1/BLOC1S7 and PI4K2A. Component of the biogenesis of lysosome-related organelles complex 1 (BLOC-1) composed of BLOC1S1, BLOC1S2, BLOC1S3, BLOC1S4, BLOC1S5, BLOC1S6, DTNBP1/BLOC1S7 and SNAPIN/BLOC1S8.

Component of the BLOC-1 complex, a complex that is required for normal biogenesis of lysosome-related organelles (LRO), such as platelet dense granules and melanosomes. In concert with the AP-3 complex, the BLOC-1 complex is required to target membrane protein cargos into vesicles assembled at cell bodies for delivery into neurites and nerve terminals. The BLOC-1 complex, in association with SNARE proteins, is also proposed to be involved in neurite extension. Plays a role in intracellular vesicle trafficking. In Rattus norvegicus (Rat), this protein is Biogenesis of lysosome-related organelles complex 1 subunit 5 (Bloc1s5).